The primary structure comprises 141 residues: Large ribosomal subunit protein uL16 (141 aa).

It belongs to the universal ribosomal protein uL16 family. As to quaternary structure, part of the 50S ribosomal subunit.

Functionally, binds 23S rRNA and is also seen to make contacts with the A and possibly P site tRNAs. The sequence is that of Large ribosomal subunit protein uL16 from Campylobacter fetus subsp. fetus (strain 82-40).